The following is a 155-amino-acid chain: Putative pre-16S rRNA nuclease (155 aa).

Positions Asp136–Pro155 are disordered.

Belongs to the YqgF nuclease family.

It is found in the cytoplasm. Functionally, could be a nuclease involved in processing of the 5'-end of pre-16S rRNA. The polypeptide is Putative pre-16S rRNA nuclease (Leifsonia xyli subsp. xyli (strain CTCB07)).